Consider the following 442-residue polypeptide: Metacaspase-5 (442 aa).

The first 18 residues, 1-18, serve as a signal peptide directing secretion; the sequence is MDLLLGVLSSGILQNALP. The important for catalytic activity stretch occupies residues 19-62; it reads FVAGVGRVKRPKRVKLEEAFREAHLCRPVIPYRAPTPYTGGRVK. 2 N-linked (GlcNAc...) asparagine glycosylation sites follow: N69 and N112. H146 is a catalytic residue. 3 residues coordinate Ca(2+): D161, D177, and D178. Residue C201 is part of the active site. D208 is a Ca(2+) binding site. N-linked (GlcNAc...) asparagine glycans are attached at residues N234, N257, N282, and N331. The tract at residues 336–442 is negatively regulates catalytic activity; it reads HYVPQQYLQP…QYLSGVGKPL (107 aa). Over residues 348–371 the composition is skewed to pro residues; that stretch reads PPQPYYPPPQPQQPYYPPPQPQQP. A disordered region spans residues 348-442; the sequence is PPQPYYPPPQ…QYLSGVGKPL (95 aa). Residues 372–382 are compositionally biased toward low complexity; that stretch reads YYPSSQLPTQY. Polar residues predominate over residues 422–434; the sequence is PSDQSTYYSSAQY.

This sequence belongs to the peptidase C14B family. In epimastigotes, the unprocessed enzyme appears to be the main form. Auto-processing is dispensable for catalytic activity towards small oligopeptide substrates.

It is found in the recycling endosome. Its activity is regulated as follows. Activated by Ca(2+). Functionally, cysteine protease that cleaves specifically after arginine or lysine residues. May play a role in apoptosis. This is Metacaspase-5 from Trypanosoma cruzi (strain CL Brener).